The sequence spans 459 residues: Sulfite oxidase (459 aa).

In terms of domain architecture, Cytochrome b5 heme-binding spans 4–83; sequence YPRYTREEVG…LQQYKVGELS (80 aa). Heme b contacts are provided by His-40, His-65, and His-69. The tract at residues 83–115 is disordered; it reads SPDEAPAAPDAQDPFAGDPPRHPGLRVNSQKPF. Over residues 85–100 the composition is skewed to low complexity; that stretch reads DEAPAAPDAQDPFAGD. The interval 86-95 is hinge; that stretch reads EAPAAPDAQD. A moco domain region spans residues 96 to 323; the sequence is PFAGDPPRHP…PSRWQQNDYK (228 aa). Mo-molybdopterin contacts are provided by residues 136–140, Cys-185, Asp-244, His-283, Arg-288, and 299–301; these read FTRNH and SVK. The tract at residues 324–459 is homodimerization; the sequence is GFSPCVDWDT…RGVLSTAWHR (136 aa).

In terms of assembly, homodimer. Requires heme b as cofactor. The cofactor is Mo-molybdopterin.

It is found in the mitochondrion intermembrane space. The catalysed reaction is sulfite + O2 + H2O = sulfate + H2O2. Its pathway is energy metabolism; sulfur metabolism. Catalyzes the oxidation of sulfite to sulfate, the terminal reaction in the oxidative degradation of sulfur-containing amino acids. This is Sulfite oxidase (SUOX) from Gallus gallus (Chicken).